The following is a 214-amino-acid chain: Shikimate kinase (214 aa).

Residue 35–40 coordinates ATP; it reads GAGKST. Ser-39 contacts Mg(2+). Substrate is bound by residues Asp-57, Arg-81, and Gly-103. Arg-141 serves as a coordination point for ATP. Position 160 (Arg-160) interacts with substrate.

The protein belongs to the shikimate kinase family. In terms of assembly, monomer. Mg(2+) serves as cofactor.

Its subcellular location is the cytoplasm. It catalyses the reaction shikimate + ATP = 3-phosphoshikimate + ADP + H(+). Its pathway is metabolic intermediate biosynthesis; chorismate biosynthesis; chorismate from D-erythrose 4-phosphate and phosphoenolpyruvate: step 5/7. Its function is as follows. Catalyzes the specific phosphorylation of the 3-hydroxyl group of shikimic acid using ATP as a cosubstrate. This Nitrobacter winogradskyi (strain ATCC 25391 / DSM 10237 / CIP 104748 / NCIMB 11846 / Nb-255) protein is Shikimate kinase.